A 365-amino-acid chain; its full sequence is 2-aminoethylphosphonate--pyruvate transaminase (365 aa).

N6-(pyridoxal phosphate)lysine is present on Lys194.

Belongs to the class-V pyridoxal-phosphate-dependent aminotransferase family. PhnW subfamily. As to quaternary structure, homodimer. Requires pyridoxal 5'-phosphate as cofactor.

The enzyme catalyses (2-aminoethyl)phosphonate + pyruvate = phosphonoacetaldehyde + L-alanine. Its function is as follows. Involved in phosphonate degradation. The sequence is that of 2-aminoethylphosphonate--pyruvate transaminase from Bacillus cytotoxicus (strain DSM 22905 / CIP 110041 / 391-98 / NVH 391-98).